The chain runs to 283 residues: Pantothenate synthetase (283 aa).

31–38 (MGALHDGH) lines the ATP pocket. His38 acts as the Proton donor in catalysis. Gln62 lines the (R)-pantoate pocket. Position 62 (Gln62) interacts with beta-alanine. Position 148–151 (148–151 (GKKD)) interacts with ATP. A (R)-pantoate-binding site is contributed by Gln154. Residues Val177 and 185 to 188 (KSSR) contribute to the ATP site.

It belongs to the pantothenate synthetase family. Homodimer.

The protein resides in the cytoplasm. The enzyme catalyses (R)-pantoate + beta-alanine + ATP = (R)-pantothenate + AMP + diphosphate + H(+). It participates in cofactor biosynthesis; (R)-pantothenate biosynthesis; (R)-pantothenate from (R)-pantoate and beta-alanine: step 1/1. In terms of biological role, catalyzes the condensation of pantoate with beta-alanine in an ATP-dependent reaction via a pantoyl-adenylate intermediate. The protein is Pantothenate synthetase of Staphylococcus aureus (strain Mu3 / ATCC 700698).